Consider the following 754-residue polypeptide: 1,4-alpha-glucan branching enzyme GlgB (754 aa).

Asp-431 serves as the catalytic Nucleophile. The active-site Proton donor is Glu-484.

This sequence belongs to the glycosyl hydrolase 13 family. GlgB subfamily. In terms of assembly, monomer.

The catalysed reaction is Transfers a segment of a (1-&gt;4)-alpha-D-glucan chain to a primary hydroxy group in a similar glucan chain.. Its pathway is glycan biosynthesis; glycogen biosynthesis. Functionally, catalyzes the formation of the alpha-1,6-glucosidic linkages in glycogen by scission of a 1,4-alpha-linked oligosaccharide from growing alpha-1,4-glucan chains and the subsequent attachment of the oligosaccharide to the alpha-1,6 position. The chain is 1,4-alpha-glucan branching enzyme GlgB from Prochlorococcus marinus (strain AS9601).